The sequence spans 226 residues: ATP synthase subunit a (226 aa).

6 helical membrane passes run phenylalanine 17–alanine 37, leucine 79–phenylalanine 99, serine 105–isoleucine 125, phenylalanine 134–valine 154, leucine 176–leucine 196, and phenylalanine 199–alanine 219.

Belongs to the ATPase A chain family. F-type ATPases have 2 components, CF(1) - the catalytic core - and CF(0) - the membrane proton channel. CF(1) has five subunits: alpha(3), beta(3), gamma(1), delta(1), epsilon(1). CF(0) has three main subunits: a(1), b(2) and c(9-12). The alpha and beta chains form an alternating ring which encloses part of the gamma chain. CF(1) is attached to CF(0) by a central stalk formed by the gamma and epsilon chains, while a peripheral stalk is formed by the delta and b chains.

It is found in the cell inner membrane. Key component of the proton channel; it plays a direct role in the translocation of protons across the membrane. The chain is ATP synthase subunit a from Campylobacter jejuni subsp. jejuni serotype O:6 (strain 81116 / NCTC 11828).